Reading from the N-terminus, the 440-residue chain is Doublesex- and mab-3-related transcription factor A2 (440 aa).

The segment at residues 59–106 (CARCRNHGVVSALKGHKRYCRWKDCMCAKCTLIAERQRVMAAQVALRR) is a DNA-binding region (DM). The interval 167–261 (PKTPLPGTVT…SPSSAASRQM (95 aa)) is disordered. The segment covering 199–213 (DMRHGSGSENGDRES) has biased composition (basic and acidic residues). Over residues 229 to 241 (TPGSISPIGSDSG) the composition is skewed to low complexity. The segment covering 251-261 (PSPSSAASRQM) has biased composition (polar residues). Residues 261 to 296 (MNAIDILTRVFPNHKRSVLELVLQGCGKNVVQAIEQ) enclose the DMA domain.

This sequence belongs to the DMRT family. As to expression, restrictively expressed in brain and developing germ cells, especially in spermatogonia, spermatocytes, spermatids, and sperm cells, and in developing oocytes, including early perinucleolus stage oocyte, late yolk vesicle stage oocyte, and oil drop stage oocyte.

It localises to the nucleus. In terms of biological role, may be involved in sexual development. The sequence is that of Doublesex- and mab-3-related transcription factor A2 (dmrta2) from Danio rerio (Zebrafish).